Reading from the N-terminus, the 195-residue chain is Pyruvoyl-dependent arginine decarboxylase AaxB (195 aa).

Ser53 is modified (pyruvic acid (Ser)).

Belongs to the pyruvoyl-dependent arginine decarboxylase family. As to quaternary structure, trimer of an alpha-beta dimer. Pyruvate is required as a cofactor.

It is found in the cytoplasm. The enzyme catalyses L-arginine + H(+) = agmatine + CO2. In terms of biological role, part of the AaxABC system, catalyzes the decarboxylation of L-arginine. The arginine uptake by the bacterium in the macrophage may be a virulence factor against the host innate immune response. This chain is Pyruvoyl-dependent arginine decarboxylase AaxB (aaxB), found in Chlamydia abortus (strain DSM 27085 / S26/3) (Chlamydophila abortus).